The following is a 106-amino-acid chain: UPF0122 protein Exig_1902 (106 aa).

The protein belongs to the UPF0122 family.

Might take part in the signal recognition particle (SRP) pathway. This is inferred from the conservation of its genetic proximity to ftsY/ffh. May be a regulatory protein. The polypeptide is UPF0122 protein Exig_1902 (Exiguobacterium sibiricum (strain DSM 17290 / CCUG 55495 / CIP 109462 / JCM 13490 / 255-15)).